The primary structure comprises 82 residues: Small ribosomal subunit protein eS27B (82 aa).

The segment at 37 to 59 adopts a C4-type zinc-finger fold; the sequence is CPGCLNITTVFSHAQTAVTCESC.

It belongs to the eukaryotic ribosomal protein eS27 family. Component of the small ribosomal subunit (SSU). Mature yeast ribosomes consist of a small (40S) and a large (60S) subunit. The 40S small subunit contains 1 molecule of ribosomal RNA (18S rRNA) and 33 different proteins (encoded by 57 genes). The large 60S subunit contains 3 rRNA molecules (25S, 5.8S and 5S rRNA) and 46 different proteins (encoded by 81 genes). The cofactor is Zn(2+). The N-terminus is not modified.

It localises to the cytoplasm. Functionally, component of the ribosome, a large ribonucleoprotein complex responsible for the synthesis of proteins in the cell. The small ribosomal subunit (SSU) binds messenger RNAs (mRNAs) and translates the encoded message by selecting cognate aminoacyl-transfer RNA (tRNA) molecules. The large subunit (LSU) contains the ribosomal catalytic site termed the peptidyl transferase center (PTC), which catalyzes the formation of peptide bonds, thereby polymerizing the amino acids delivered by tRNAs into a polypeptide chain. The nascent polypeptides leave the ribosome through a tunnel in the LSU and interact with protein factors that function in enzymatic processing, targeting, and the membrane insertion of nascent chains at the exit of the ribosomal tunnel. This chain is Small ribosomal subunit protein eS27B, found in Saccharomyces cerevisiae (strain ATCC 204508 / S288c) (Baker's yeast).